The chain runs to 181 residues: Acireductone dioxygenase (181 aa).

Residues His100, His102, Glu106, and His145 each coordinate Fe(2+). The Ni(2+) site is built by His100, His102, Glu106, and His145.

The protein belongs to the acireductone dioxygenase (ARD) family. Monomer. The cofactor is Fe(2+). Ni(2+) is required as a cofactor.

It carries out the reaction 1,2-dihydroxy-5-(methylsulfanyl)pent-1-en-3-one + O2 = 3-(methylsulfanyl)propanoate + CO + formate + 2 H(+). It catalyses the reaction 1,2-dihydroxy-5-(methylsulfanyl)pent-1-en-3-one + O2 = 4-methylsulfanyl-2-oxobutanoate + formate + 2 H(+). It functions in the pathway amino-acid biosynthesis; L-methionine biosynthesis via salvage pathway; L-methionine from S-methyl-5-thio-alpha-D-ribose 1-phosphate: step 5/6. In terms of biological role, catalyzes 2 different reactions between oxygen and the acireductone 1,2-dihydroxy-3-keto-5-methylthiopentene (DHK-MTPene) depending upon the metal bound in the active site. Fe-containing acireductone dioxygenase (Fe-ARD) produces formate and 2-keto-4-methylthiobutyrate (KMTB), the alpha-ketoacid precursor of methionine in the methionine recycle pathway. Ni-containing acireductone dioxygenase (Ni-ARD) produces methylthiopropionate, carbon monoxide and formate, and does not lie on the methionine recycle pathway. The polypeptide is Acireductone dioxygenase (Trichodesmium erythraeum (strain IMS101)).